We begin with the raw amino-acid sequence, 182 residues long: Ribosome-recycling factor (182 aa).

This sequence belongs to the RRF family.

It localises to the cytoplasm. Functionally, responsible for the release of ribosomes from messenger RNA at the termination of protein biosynthesis. May increase the efficiency of translation by recycling ribosomes from one round of translation to another. The chain is Ribosome-recycling factor from Gloeobacter violaceus (strain ATCC 29082 / PCC 7421).